Here is a 592-residue protein sequence, read N- to C-terminus: MRRTHYCGELNAKNIGEKVYLSGWVHRIRHHGGLIFIDLRDRSGIVQLVFDPSISKESYDIADTVGNEWVISVEGKVRKRPEGMENPKIPTGEIEIEVEKIKIENTAKPLPFNLWTNKEIDEIVRLKYRYLDLRRDKMQSNIIFRHNFILSIRNFLAKNGFIEIETPYLIVSTPEGARDFIIPSRLQPGKFYALPQSPQLFKQILMVAGFDRYFQIARCFRDEDLRADRQPEFTQLDMEMSFIEVEDVFTIIEELFKTVLKEVMNIEINTPFPRLSYEDAMNTYGSDKPDLRYDLKIVDVTNILKDLPLEFIRSTIEKDGVIKGIVLKNIVPSRREWSIIENKVRELKGKGIMWFTYADGELKSSISKYLDENIKDKLIKNLNLKSGDSFFCIAGTWKDVVKILGILRLEVAELFNMEKKEGLFFLWITDFPLFEYDEEERRIVAEHHPFTSPKDEDIPLLDTNPLKVKAKCYDLVLNGTELGSGSIRIHKKEIQEKVFNILGITPEDAKKKFGFLLEAFEYGAPPHGGIALGIDRIIAILTNSNSLREVIAFPKTQSGTCLLTGAPSEVDPKQLEEVHIKVVYPEEKKEED.

Glutamate 175 provides a ligand contact to L-aspartate. The tract at residues 199-202 (QLFK) is aspartate. Arginine 221 provides a ligand contact to L-aspartate. ATP contacts are provided by residues 221 to 223 (RDE) and glutamine 230. Residue histidine 447 participates in L-aspartate binding. Glutamate 481 contributes to the ATP binding site. An L-aspartate-binding site is contributed by arginine 488. Residue 533–536 (GIDR) coordinates ATP.

This sequence belongs to the class-II aminoacyl-tRNA synthetase family. Type 1 subfamily. In terms of assembly, homodimer.

The protein resides in the cytoplasm. The enzyme catalyses tRNA(Asx) + L-aspartate + ATP = L-aspartyl-tRNA(Asx) + AMP + diphosphate. In terms of biological role, aspartyl-tRNA synthetase with relaxed tRNA specificity since it is able to aspartylate not only its cognate tRNA(Asp) but also tRNA(Asn). Reaction proceeds in two steps: L-aspartate is first activated by ATP to form Asp-AMP and then transferred to the acceptor end of tRNA(Asp/Asn). This chain is Aspartate--tRNA(Asp/Asn) ligase, found in Dictyoglomus turgidum (strain DSM 6724 / Z-1310).